A 581-amino-acid chain; its full sequence is Arginine--tRNA ligase (581 aa).

A 'HIGH' region motif is present at residues 122 to 132; sequence PNVAKPMHVGH.

Belongs to the class-I aminoacyl-tRNA synthetase family. In terms of assembly, monomer.

The protein localises to the cytoplasm. The catalysed reaction is tRNA(Arg) + L-arginine + ATP = L-arginyl-tRNA(Arg) + AMP + diphosphate. The polypeptide is Arginine--tRNA ligase (Francisella tularensis subsp. tularensis (strain FSC 198)).